The chain runs to 426 residues: Pannexin-1 (426 aa).

The Cytoplasmic segment spans residues 1-40 (MAIAQLATEYVFSDFLLKEPTEPKFKGLRLELAVDKMVTC). Cys-40 bears the S-nitrosocysteine mark. Residues 41–61 (IAVGLPLLLISLAFAQEISIG) form a helical membrane-spanning segment. The Extracellular segment spans residues 62-106 (TQISCFSPSSFSWRQAAFVDSYCWAAVQQKNSLQSESGNLPLWLH). 2 disulfide bridges follow: Cys-66/Cys-265 and Cys-84/Cys-246. Residues 107-127 (KFFPYILLLFAILLYLPPLFW) traverse the membrane as a helical segment. Topologically, residues 128-217 (RFAAAPHICS…NLIIKYISCR (90 aa)) are cytoplasmic. Position 199 is a phosphotyrosine (Tyr-199). Residues 218–238 (LLTLIIILLACIYLGYYFSLS) traverse the membrane as a helical segment. The Extracellular segment spans residues 239–266 (SLSDEFVCSIKSGILRNDSTVPDQFQCK). N-linked (GlcNAc...) asparagine glycosylation is present at Asn-255. A helical transmembrane segment spans residues 267–287 (LIAVGIFQLLSVINLVVYVLL). Residues 288 to 426 (APVVVYTLFV…ARQRLLDSSC (139 aa)) are Cytoplasmic-facing. Cys-347 carries the S-nitrosocysteine modification. The segment covering 405–414 (DSETKANNGE) has biased composition (polar residues). The segment at 405–426 (DSETKANNGEKNARQRLLDSSC) is disordered. Residues 415–426 (KNARQRLLDSSC) show a composition bias toward basic and acidic residues.

Belongs to the pannexin family. Homoheptameric. Post-translationally, S-nitrosylation inhibits channel currents and ATP release. In terms of processing, N-glycosylation plays a role in cell surface targeting. Glycosylation at its extracellular surface makes unlikely that two oligomers could dock to form an intercellular channel such as in gap junctions. Exists in three glycosylation states: non-glycosylated (GLY0), high-mannose glycosylated (GLY1), and fully mature glycosylated (GLY2). Cleaved by CASP3 and CASP7 during apoptosis. Cleavage opens the channel for the release of metabolites and induces plasma membrane permeability during apoptosis. Post-translationally, phosphorylated at Tyr-199 by SRC. Phosphorylation activates ATP release. Constitutively phosphorylated in vascular smooth muscle cells. As to expression, widely expressed. Highest expression is observed in oocytes and brain. Detected at very low levels in sperm cells.

It is found in the cell membrane. It localises to the endoplasmic reticulum membrane. The enzyme catalyses chloride(in) = chloride(out). It carries out the reaction iodide(out) = iodide(in). It catalyses the reaction ATP(in) = ATP(out). The catalysed reaction is K(+)(in) = K(+)(out). The enzyme catalyses Ca(2+)(in) = Ca(2+)(out). It carries out the reaction Na(+)(in) = Na(+)(out). It catalyses the reaction nitrate(in) = nitrate(out). The catalysed reaction is L-aspartate(out) = L-aspartate(in). The enzyme catalyses L-glutamate(out) = L-glutamate(in). It carries out the reaction D-gluconate(in) = D-gluconate(out). It catalyses the reaction spermidine(in) = spermidine(out). Functionally, ion channel involved in a variety of physiological functions such as blood pressure regulation, apoptotic cell clearance and oogenesis. Forms anion-selective channels with relatively low conductance and an order of permeabilities: nitrate&gt;iodide&gt;chlroride&gt;&gt;aspartate=glutamate=gluconate. Can release ATP upon activation through phosphorylation or cleavage at C-terminus. May play a role as a Ca(2+)-leak channel to regulate ER Ca(2+) homeostasis. During apoptosis, the C terminal tail is cleaved by caspases, which opens the main pore acting as a large-pore ATP efflux channel with a broad distribution, which allows the regulated release of molecules and ions smaller than 1 kDa, such as nucleotides ATP and UTP, and selective plasma membrane permeability to attract phagocytes that engulf the dying cells. This chain is Pannexin-1, found in Homo sapiens (Human).